The following is a 491-amino-acid chain: Endoglucanase 14 (491 aa).

The N-terminal stretch at 1–31 is a signal peptide; sequence MSQLKIGSSQCLWTSICIVLFVLSMARGAVS. Aspartate 86 serves as the catalytic Nucleophile. Asparagine 397 carries an N-linked (GlcNAc...) asparagine glycan. Active-site residues include histidine 413, aspartate 465, and glutamate 474.

The protein belongs to the glycosyl hydrolase 9 (cellulase E) family.

Its subcellular location is the secreted. The catalysed reaction is Endohydrolysis of (1-&gt;4)-beta-D-glucosidic linkages in cellulose, lichenin and cereal beta-D-glucans.. This Arabidopsis thaliana (Mouse-ear cress) protein is Endoglucanase 14.